A 453-amino-acid chain; its full sequence is Bifunctional protein GlmU (453 aa).

Positions 1-231 (MERTCLAVIL…EIEMTGCNNR (231 aa)) are pyrophosphorylase. Residues 10 to 13 (LAAG), K24, Q77, 82 to 83 (GT), 105 to 107 (YGD), G143, E157, N172, and N229 each bind UDP-N-acetyl-alpha-D-glucosamine. Mg(2+) is bound at residue D107. N229 lines the Mg(2+) pocket. Positions 232 to 252 (AELAVIERFWQERRRREMMLA) are linker. The interval 253-453 (GVTMIAPETV…AIKAAKKAEA (201 aa)) is N-acetyltransferase. 2 residues coordinate UDP-N-acetyl-alpha-D-glucosamine: R318 and K336. H348 serves as the catalytic Proton acceptor. The UDP-N-acetyl-alpha-D-glucosamine site is built by Y351 and N362. Acetyl-CoA-binding positions include A365, 371–372 (NY), S390, S408, and R425.

It in the N-terminal section; belongs to the N-acetylglucosamine-1-phosphate uridyltransferase family. This sequence in the C-terminal section; belongs to the transferase hexapeptide repeat family. Homotrimer. The cofactor is Mg(2+).

The protein localises to the cytoplasm. It carries out the reaction alpha-D-glucosamine 1-phosphate + acetyl-CoA = N-acetyl-alpha-D-glucosamine 1-phosphate + CoA + H(+). It catalyses the reaction N-acetyl-alpha-D-glucosamine 1-phosphate + UTP + H(+) = UDP-N-acetyl-alpha-D-glucosamine + diphosphate. Its pathway is nucleotide-sugar biosynthesis; UDP-N-acetyl-alpha-D-glucosamine biosynthesis; N-acetyl-alpha-D-glucosamine 1-phosphate from alpha-D-glucosamine 6-phosphate (route II): step 2/2. It participates in nucleotide-sugar biosynthesis; UDP-N-acetyl-alpha-D-glucosamine biosynthesis; UDP-N-acetyl-alpha-D-glucosamine from N-acetyl-alpha-D-glucosamine 1-phosphate: step 1/1. It functions in the pathway bacterial outer membrane biogenesis; LPS lipid A biosynthesis. In terms of biological role, catalyzes the last two sequential reactions in the de novo biosynthetic pathway for UDP-N-acetylglucosamine (UDP-GlcNAc). The C-terminal domain catalyzes the transfer of acetyl group from acetyl coenzyme A to glucosamine-1-phosphate (GlcN-1-P) to produce N-acetylglucosamine-1-phosphate (GlcNAc-1-P), which is converted into UDP-GlcNAc by the transfer of uridine 5-monophosphate (from uridine 5-triphosphate), a reaction catalyzed by the N-terminal domain. The sequence is that of Bifunctional protein GlmU from Rhizobium etli (strain ATCC 51251 / DSM 11541 / JCM 21823 / NBRC 15573 / CFN 42).